The chain runs to 754 residues: 5-methyltetrahydropteroyltriglutamate--homocysteine methyltransferase (754 aa).

5-methyltetrahydropteroyltri-L-glutamate contacts are provided by residues Arg-17 to Lys-20 and Lys-117. L-homocysteine contacts are provided by residues Ile-431–Ser-433 and Glu-484. L-methionine contacts are provided by residues Ile-431–Ser-433 and Glu-484. 5-methyltetrahydropteroyltri-L-glutamate contacts are provided by residues Arg-515 to Cys-516 and Trp-561. L-homocysteine is bound at residue Asp-599. Residue Asp-599 coordinates L-methionine. Glu-605 contacts 5-methyltetrahydropteroyltri-L-glutamate. Zn(2+) is bound by residues His-641, Cys-643, and Glu-665. The Proton donor role is filled by His-694. Position 726 (Cys-726) interacts with Zn(2+).

Belongs to the vitamin-B12 independent methionine synthase family. Zn(2+) is required as a cofactor.

It carries out the reaction 5-methyltetrahydropteroyltri-L-glutamate + L-homocysteine = tetrahydropteroyltri-L-glutamate + L-methionine. It participates in amino-acid biosynthesis; L-methionine biosynthesis via de novo pathway; L-methionine from L-homocysteine (MetE route): step 1/1. Catalyzes the transfer of a methyl group from 5-methyltetrahydrofolate to homocysteine resulting in methionine formation. This Salmonella dublin (strain CT_02021853) protein is 5-methyltetrahydropteroyltriglutamate--homocysteine methyltransferase.